A 633-amino-acid chain; its full sequence is Extracellular metalloproteinase 5 (633 aa).

The first 21 residues, 1–21 (MHGLLLAAAGLLSLPLHVIAH), serve as a signal peptide directing secretion. The propeptide occupies 22–245 (PQPSTNLAGR…HNVVDYVSHA (224 aa)). An N-linked (GlcNAc...) asparagine glycan is attached at Asn-286. His-428 lines the Zn(2+) pocket. Residue Glu-429 is part of the active site. His-432 contacts Zn(2+). Asn-592 and Asn-621 each carry an N-linked (GlcNAc...) asparagine glycan.

Belongs to the peptidase M36 family. Requires Zn(2+) as cofactor.

It localises to the secreted. Functionally, secreted metalloproteinase probably acting as a virulence factor. The chain is Extracellular metalloproteinase 5 (MEP5) from Arthroderma benhamiae (Trichophyton mentagrophytes).